Consider the following 310-residue polypeptide: 4-hydroxyproline 2-epimerase (310 aa).

The active-site Proton acceptor is Cys-88. Substrate-binding positions include 89-90 (GH), His-208, and Asp-232. The active-site Proton donor is Cys-236. 237-238 (GT) contacts substrate.

The protein belongs to the proline racemase family.

It carries out the reaction trans-4-hydroxy-L-proline = cis-4-hydroxy-D-proline. In terms of biological role, catalyzes the epimerization of trans-4-hydroxy-L-proline (t4LHyp) to cis-4-hydroxy-D-proline (c4DHyp). Is likely involved in a degradation pathway that converts t4LHyp to alpha-ketoglutarate. Displays no proline racemase activity. This Burkholderia cenocepacia (strain ATCC BAA-245 / DSM 16553 / LMG 16656 / NCTC 13227 / J2315 / CF5610) (Burkholderia cepacia (strain J2315)) protein is 4-hydroxyproline 2-epimerase.